The following is a 444-amino-acid chain: Platelet-activating factor acetylhydrolase (444 aa).

The signal sequence occupies residues 1-21; that stretch reads MLPPKLHALFCLCSCLTLVHP. 2 N-linked (GlcNAc...) asparagine glycosylation sites follow: Asn60 and Asn200. The active-site Nucleophile is the Ser274. Residues Asp297 and His352 each act as charge relay system in the active site. A glycan (N-linked (GlcNAc...) asparagine) is linked at Asn424.

The protein belongs to the AB hydrolase superfamily. Lipase family. N-glycosylated. In terms of tissue distribution, plasma.

The protein localises to the secreted. It localises to the extracellular space. It carries out the reaction a 1-O-alkyl-2-acetyl-sn-glycero-3-phosphocholine + H2O = a 1-O-alkyl-sn-glycero-3-phosphocholine + acetate + H(+). The catalysed reaction is 1-O-decyl-2-acetyl-sn-glycero-3-phosphocholine + H2O = 1-O-decyl-sn-glycero-3-phosphocholine + acetate + H(+). It catalyses the reaction 1-O-dodecyl-2-acetyl-sn-glycero-3-phosphocholine + H2O = 1-O-dodecyl-sn-glycero-3-phosphocholine + acetate + H(+). The enzyme catalyses 1-O-tetradecyl-2-acetyl-sn-glycero-3-phosphocholine + H2O = 1-O-tetradecyl-sn-glycero-3-phosphocholine + acetate + H(+). It carries out the reaction 1-O-hexadecyl-2-acetyl-sn-glycero-3-phosphocholine + H2O = 1-O-hexadecyl-sn-glycero-3-phosphocholine + acetate + H(+). The catalysed reaction is 1-O-octadecyl-2-acetyl-sn-glycero-3-phosphocholine + H2O = 1-O-octadecyl-sn-glycero-3-phosphocholine + acetate + H(+). It catalyses the reaction 1-hexadecanoyl-2-acetyl-sn-glycero-3-phosphocholine + H2O = 1-hexadecanoyl-sn-glycero-3-phosphocholine + acetate + H(+). The enzyme catalyses 1-hexadecanoyl-2-propionyl-sn-glycero-3-phosphocholine + H2O = propanoate + 1-hexadecanoyl-sn-glycero-3-phosphocholine + H(+). It carries out the reaction 1-hexadecanoyl-2-butanoyl-sn-glycero-3-phosphocholine + H2O = butanoate + 1-hexadecanoyl-sn-glycero-3-phosphocholine + H(+). The catalysed reaction is 1-hexadecanoyl-2-pentanoyl-sn-glycero-3-phosphocholine + H2O = pentanoate + 1-hexadecanoyl-sn-glycero-3-phosphocholine + H(+). It catalyses the reaction 1-hexadecanoyl-2-glutaroyl-sn-glycero-3-phosphocholine + H2O = glutarate + 1-hexadecanoyl-sn-glycero-3-phosphocholine + H(+). The enzyme catalyses 1-hexadecanoyl-2-(5-oxopentanoyl)-sn-glycero-3-phosphocholine + H2O = 5-oxopentanoate + 1-hexadecanoyl-sn-glycero-3-phosphocholine + H(+). It carries out the reaction 1-hexadecanoyl-2-(9-oxononanoyl)-sn-glycero-3-phosphocholine + H2O = 9-oxononanoate + 1-hexadecanoyl-sn-glycero-3-phosphocholine + H(+). The catalysed reaction is 1-hexadecanoyl-2-[9-hydroperoxy-(10E-octadecenoyl)]-sn-glycero-3-phosphocholine + H2O = 9-hydroperoxy-10E-octadecenoate + 1-hexadecanoyl-sn-glycero-3-phosphocholine + H(+). It catalyses the reaction 1-hexadecanoyl-2-(10-hydroperoxy-8E-octadecenoyl)-sn-glycero-3-phosphocholine + H2O = 10-hydroperoxy-(8E)-octadecenoate + 1-hexadecanoyl-sn-glycero-3-phosphocholine + H(+). Functionally, lipoprotein-associated calcium-independent phospholipase A2 involved in phospholipid catabolism during inflammatory and oxidative stress response. At the lipid-aqueous interface, hydrolyzes the ester bond of fatty acyl group attached at sn-2 position of phospholipids (phospholipase A2 activity). Specifically targets phospholipids with a short-chain fatty acyl group at sn-2 position. Can hydrolyze phospholipids with long fatty acyl chains, only if they carry oxidized functional groups. Hydrolyzes and inactivates platelet-activating factor (PAF, 1-O-alkyl-2-acetyl-sn-glycero-3-phosphocholine), a potent pro-inflammatory signaling lipid that acts through PTAFR on various innate immune cells. Hydrolyzes oxidatively truncated phospholipids carrying an aldehyde group at omega position, preventing their accumulation in low-density lipoprotein (LDL) particles and uncontrolled pro-inflammatory effects. As part of high-density lipoprotein (HDL) particles, can hydrolyze phospholipids having long-chain fatty acyl hydroperoxides at sn-2 position and protect against potential accumulation of these oxylipins in the vascular wall. Catalyzes the release from membrane phospholipids of F2-isoprostanes, lipid biomarkers of cellular oxidative damage. In Canis lupus familiaris (Dog), this protein is Platelet-activating factor acetylhydrolase (PLA2G7).